The chain runs to 596 residues: Isocitrate dehydrogenase kinase/phosphatase (596 aa).

Residues 316–322 and lysine 337 contribute to the ATP site; that span reads APGIRGM. Aspartate 372 is an active-site residue.

The protein belongs to the AceK family.

The protein resides in the cytoplasm. The enzyme catalyses L-seryl-[isocitrate dehydrogenase] + ATP = O-phospho-L-seryl-[isocitrate dehydrogenase] + ADP + H(+). Functionally, bifunctional enzyme which can phosphorylate or dephosphorylate isocitrate dehydrogenase (IDH) on a specific serine residue. This is a regulatory mechanism which enables bacteria to bypass the Krebs cycle via the glyoxylate shunt in response to the source of carbon. When bacteria are grown on glucose, IDH is fully active and unphosphorylated, but when grown on acetate or ethanol, the activity of IDH declines drastically concomitant with its phosphorylation. This chain is Isocitrate dehydrogenase kinase/phosphatase, found in Cronobacter sakazakii (strain ATCC BAA-894) (Enterobacter sakazakii).